A 310-amino-acid polypeptide reads, in one-letter code: Transaldolase (310 aa).

K124 acts as the Schiff-base intermediate with substrate in catalysis.

Belongs to the transaldolase family. Type 1 subfamily. As to quaternary structure, homodimer.

It is found in the cytoplasm. The catalysed reaction is D-sedoheptulose 7-phosphate + D-glyceraldehyde 3-phosphate = D-erythrose 4-phosphate + beta-D-fructose 6-phosphate. It functions in the pathway carbohydrate degradation; pentose phosphate pathway; D-glyceraldehyde 3-phosphate and beta-D-fructose 6-phosphate from D-ribose 5-phosphate and D-xylulose 5-phosphate (non-oxidative stage): step 2/3. In terms of biological role, transaldolase is important for the balance of metabolites in the pentose-phosphate pathway. This is Transaldolase from Teredinibacter turnerae (strain ATCC 39867 / T7901).